The chain runs to 180 residues: UPF0134 protein MPN_368 (180 aa).

Belongs to the UPF0134 family.

In Mycoplasma pneumoniae (strain ATCC 29342 / M129 / Subtype 1) (Mycoplasmoides pneumoniae), this protein is UPF0134 protein MPN_368.